The following is a 346-amino-acid chain: N(4)-(beta-N-acetylglucosaminyl)-L-asparaginase (346 aa).

A signal peptide spans 1–23 (MERKSNLSLLLLLLVLGMPLVRG). Residue Asn-38 is glycosylated (N-linked (GlcNAc...) asparagine). Intrachain disulfides connect Cys-64–Cys-69 and Cys-163–Cys-179. Residue Thr-206 is the Nucleophile of the active site. Substrate contacts are provided by residues 234–237 (RVGD) and 257–260 (TGDG). A disulfide bridge connects residues Cys-286 and Cys-306. An N-linked (GlcNAc...) asparagine glycan is attached at Asn-310. Cysteines 317 and 345 form a disulfide.

Belongs to the Ntn-hydrolase family. As to quaternary structure, heterotetramer of two alpha and two beta chains arranged as a dimer of alpha/beta heterodimers. Post-translationally, cleaved into an alpha and beta chain by autocatalysis; this activates the enzyme. The N-terminal residue of the beta subunit is responsible for the nucleophile hydrolase activity. N-glycosylated.

It is found in the lysosome. The catalysed reaction is N(4)-(beta-N-acetyl-D-glucosaminyl)-L-asparagine + H2O = N-acetyl-beta-D-glucosaminylamine + L-aspartate + H(+). Cleaves the GlcNAc-Asn bond which joins oligosaccharides to the peptide of asparagine-linked glycoproteins. The sequence is that of N(4)-(beta-N-acetylglucosaminyl)-L-asparaginase (Aga) from Mus musculus (Mouse).